We begin with the raw amino-acid sequence, 453 residues long: Putative long chain fatty acid-CoA ligase VraA (453 aa).

Belongs to the ATP-dependent AMP-binding enzyme family.

This chain is Putative long chain fatty acid-CoA ligase VraA (vraA), found in Staphylococcus epidermidis (strain ATCC 35984 / DSM 28319 / BCRC 17069 / CCUG 31568 / BM 3577 / RP62A).